Reading from the N-terminus, the 96-residue chain is Co-chaperonin GroES (96 aa).

It belongs to the GroES chaperonin family. Heptamer of 7 subunits arranged in a ring. Interacts with the chaperonin GroEL.

Its subcellular location is the cytoplasm. Together with the chaperonin GroEL, plays an essential role in assisting protein folding. The GroEL-GroES system forms a nano-cage that allows encapsulation of the non-native substrate proteins and provides a physical environment optimized to promote and accelerate protein folding. GroES binds to the apical surface of the GroEL ring, thereby capping the opening of the GroEL channel. The chain is Co-chaperonin GroES from Halorhodospira halophila (strain DSM 244 / SL1) (Ectothiorhodospira halophila (strain DSM 244 / SL1)).